Reading from the N-terminus, the 236-residue chain is Phycocyanobilin:ferredoxin oxidoreductase (236 aa).

This sequence belongs to the HY2 family.

It carries out the reaction (2R,3Z)-phycocyanobilin + 4 oxidized [2Fe-2S]-[ferredoxin] = biliverdin IXalpha + 4 reduced [2Fe-2S]-[ferredoxin] + 4 H(+). Its function is as follows. Catalyzes the four-electron reduction of biliverdin IX-alpha (2-electron reduction at both the A and D rings); the reaction proceeds via an isolatable 2-electron intermediate, 181,182-dihydrobiliverdin. In Thermosynechococcus vestitus (strain NIES-2133 / IAM M-273 / BP-1), this protein is Phycocyanobilin:ferredoxin oxidoreductase (pcyA).